Consider the following 1382-residue polypeptide: ABC-type transporter atr1 (1382 aa).

Residues 1–12 show a composition bias toward basic and acidic residues; that stretch reads MRFRSDSRADHQ. The segment at 1–56 is disordered; it reads MRFRSDSRADHQHPKKQGSMDPDTIQALKYQDRSSSSSSNNKPKEKVGSASTSPSP. Asn62 carries an N-linked (GlcNAc...) asparagine glycan. Transmembrane regions (helical) follow at residues 101 to 121, 159 to 179, 233 to 253, 259 to 279, 339 to 359, and 374 to 394; these read LFGT…NIFI, LILL…MAVF, LPMA…AFAF, LVLL…GALT, GVGV…AFFY, and IVSV…LFSM. Positions 101 to 400 constitute an ABC transmembrane type-1 1 domain; it reads LFGTGMAIAA…LFSMIENFTM (300 aa). A glycan (N-linked (GlcNAc...) asparagine) is linked at Asn397. Residues 445–688 form the ABC transporter 1 domain; that stretch reads LKLDHVHFAY…PNGTFASMLR (244 aa). Residue 480–487 participates in ATP binding; that stretch reads GLSGSGKS. N-linked (GlcNAc...) asparagine glycosylation occurs at Asn680. Residues 738–768 are disordered; that stretch reads SVKPKDPSKNFEPPGESYASPAADGVKQDAP. The 298-residue stretch at 797–1094 folds into the ABC transmembrane type-1 2 domain; the sequence is LGSLCAAIIG…IFNYSADFSS (298 aa). A helical transmembrane segment spans residues 800–820; that stretch reads LCAAIIGAVYPVYAILFGTAI. Asn827 carries N-linked (GlcNAc...) asparagine glycosylation. Residues 848-868 traverse the membrane as a helical segment; it reads ISSGSFFIVAVGCAFISFYHV. The N-linked (GlcNAc...) asparagine glycan is linked to Asn903. 2 helical membrane-spanning segments follow: residues 911 to 931 and 951 to 973; these read SLSV…GSIV and LALV…LRVL. Asn1020 carries an N-linked (GlcNAc...) asparagine glycan. Transmembrane regions (helical) follow at residues 1034–1054 and 1067–1087; these read VLFG…FWYG and GFFT…NIFN. Residues 1136–1377 enclose the ABC transporter 2 domain; the sequence is IALKEVTFRY…DGLFALMARL (242 aa). 1171–1178 lines the ATP pocket; that stretch reads GGSGSGKS. Asn1324 carries an N-linked (GlcNAc...) asparagine glycan.

The protein belongs to the ABC transporter superfamily. ABCB family. Multidrug resistance exporter (TC 3.A.1.201) subfamily.

The protein resides in the cell membrane. In terms of biological role, ABC-type transporter; part of the gene cluster that mediates the biosynthesis of the glycolipid biosurfactant ustilagic acid (UA). UA is a secreted cellobiose glycolipid that is toxic for many microorganisms and confers biocontrol activity to U.maydis. Export of UA is presumably catalyzed by the ABC transporter atr1. Atr1 appears to be quite unspecific, as many of the UA derivatives produced by cluster mutant strains are readily exported. The sequence is that of ABC-type transporter atr1 from Mycosarcoma maydis (Corn smut fungus).